Here is a 174-residue protein sequence, read N- to C-terminus: Centrosomal protein 20 (174 aa).

The segment at 1–104 (MATVTELKAV…AFEESKDNSI (104 aa)) is necessary and sufficient for homooligomerization and localization to centrosomes and pericentriolar satellites. In terms of domain architecture, LisH spans 49–81 (ENLLINELIREYLEFNKYKYTASVLIAESGQPV). A disordered region spans residues 136-174 (TKHLSWKPSRRPDDDHVRKDTGPRTTTEELPAAAQAVSR). At Ser144 the chain carries Phosphoserine. Residues 145–157 (RRPDDDHVRKDTG) show a composition bias toward basic and acidic residues.

This sequence belongs to the CEP43 family. As to quaternary structure, homooligomer; probably required for localization to centrosomes. Forms a complex with KIAA0753/OFIP and OFD1; within this complex may stabilize the interaction between OFD1 and KIAA0753/OFIP. Interacts with PCM1; this interaction may be mediated by KIAA0753/OFIP.

It localises to the cytoplasm. The protein resides in the cytoskeleton. The protein localises to the microtubule organizing center. It is found in the centrosome. Its subcellular location is the centriole. It localises to the cell projection. The protein resides in the cilium. The protein localises to the cilium basal body. It is found in the cytoplasmic granule. Its subcellular location is the centriolar satellite. Involved in the biogenesis of cilia. Required for the recruitment of PLK1 to centrosomes and S phase progression. This is Centrosomal protein 20 from Mus musculus (Mouse).